We begin with the raw amino-acid sequence, 302 residues long: N-acetyl-D-glucosamine kinase (302 aa).

ATP-binding positions include Gly4–Lys11 and Gly133–Tyr140. Residues His157, Cys177, Cys179, and Cys184 each contribute to the Zn(2+) site.

This sequence belongs to the ROK (NagC/XylR) family. NagK subfamily.

It carries out the reaction N-acetyl-D-glucosamine + ATP = N-acetyl-D-glucosamine 6-phosphate + ADP + H(+). Its pathway is cell wall biogenesis; peptidoglycan recycling. In terms of biological role, catalyzes the phosphorylation of N-acetyl-D-glucosamine (GlcNAc) derived from cell-wall degradation, yielding GlcNAc-6-P. The chain is N-acetyl-D-glucosamine kinase from Vibrio parahaemolyticus serotype O3:K6 (strain RIMD 2210633).